Reading from the N-terminus, the 763-residue chain is Amyloid beta precursor like protein 2 (763 aa).

A signal peptide spans 1–31 (MAATGTAAAAATGRLLLLLLVGLTAPALALA). Over 32–692 (GYIEALAANA…PLREDFSLSS (661 aa)) the chain is Extracellular. Positions 46 to 139 (AVAEPQIAMF…PFKCLVGEFV (94 aa)) are GFLD subdomain. In terms of domain architecture, E1 spans 46-205 (AVAEPQIAMF…HGTEYVCCPQ (160 aa)). 6 cysteine pairs are disulfide-bonded: C56–C80, C91–C133, C116–C123, C149–C203, C160–C190, and C174–C202. The segment at 147 to 205 (EKCQFFHKERMEVCENHQHWHTVVKEACLTQGMTLYSYGMLLPCGVDQFHGTEYVCCPQ) is cuBD subdomain. Cu cation-binding residues include H163, H167, and Y184. The tract at residues 211–299 (SVSKEEEEED…EPGSDGTMSD (89 aa)) is disordered. Acidic residues-rich tracts occupy residues 215-233 (EEEE…EEDY) and 242-269 (TEAD…EVVE). Residues 270–282 (DRDYYYDTFKGDD) show a composition bias toward basic and acidic residues. One can recognise a BPTI/Kunitz inhibitor domain in the interval 306-364 (VKAVCSQEAMTGPCRAVMPRWYFDLSKGKCVRFIYGGCGGNRNNFESEDYCMAVCKAMI). 3 cysteine pairs are disulfide-bonded: C310-C360, C319-C343, and C335-C356. The E2 domain maps to 373–564 (DVDVYFETSA…QEIQEEIDEL (192 aa)). S590 is subject to Phosphoserine; by FAM20C. S626 carries an O-linked (Xyl...) (chondroitin sulfate) serine glycan. Residues 693–716 (SALIGLLVIAVAIATVIVISLVML) form a helical membrane-spanning segment. The Cytoplasmic portion of the chain corresponds to 717–763 (RKRQYGTISHGIVEVDPMLTPEERHLNKMQNHGYENPTYKYLEQMQI). The interval 749–763 (GYENPTYKYLEQMQI) is interaction with DAB2. Residues 750–755 (YENPTY) carry the NPXY motif motif.

The protein belongs to the APP family. Interacts with CPEB1. Interacts (via NPXY motif) with DAB2 (via PID domain); the interaction is impaired by tyrosine phosphorylation of the NPXY motif. Interacts (via cytoplasmic domain) with APBB2/FE65L. Interacts (via intracellular domain) with APBB3/FE65L2. Post-translationally, the BPTI/Kunitz inhibitor domain is O-glycosylated. In terms of tissue distribution, expressed in placenta, brain, heart, lung, liver, kidney and endothelial tissues.

The protein resides in the cell membrane. It localises to the nucleus. Functionally, may play a role in the regulation of hemostasis. The soluble form may have inhibitory properties towards coagulation factors. May interact with cellular G-protein signaling pathways. May bind to the DNA 5'-GTCACATG-3'(CDEI box). Inhibits trypsin, chymotrypsin, plasmin, factor XIA and plasma and glandular kallikrein. Modulates the Cu/Zn nitric oxide-catalyzed autodegradation of GPC1 heparan sulfate side chains in fibroblasts. The polypeptide is Amyloid beta precursor like protein 2 (Homo sapiens (Human)).